Consider the following 442-residue polypeptide: Adenylosuccinate synthetase (442 aa).

GTP is bound by residues 25–31, 53–55, and lysine 62; these read GDEGKGK and GHT. Aspartate 26 serves as the catalytic Proton acceptor. Residues aspartate 26 and glycine 53 each contribute to the Mg(2+) site. Residues 26–29 and 51–54 contribute to the IMP site; these read DEGK and NAGH. The active-site Proton donor is histidine 54. The IMP site is built by threonine 141, arginine 155, asparagine 232, and threonine 247. A GTP-binding site is contributed by threonine 307. 307–313 serves as a coordination point for substrate; that stretch reads TTTKRPR. An IMP-binding site is contributed by arginine 311. GTP contacts are provided by residues arginine 313, 339–341, and 425–427; these read KLD and GVG.

It belongs to the adenylosuccinate synthetase family. Homodimer. Requires Mg(2+) as cofactor.

Its subcellular location is the cytoplasm. It carries out the reaction IMP + L-aspartate + GTP = N(6)-(1,2-dicarboxyethyl)-AMP + GDP + phosphate + 2 H(+). It participates in purine metabolism; AMP biosynthesis via de novo pathway; AMP from IMP: step 1/2. With respect to regulation, inhibited by hadacidin. Activated by fructose 1,6-bisphosphate. Its function is as follows. Plays an important role in the salvage pathway for purine nucleotide biosynthesis. Catalyzes the first committed step in the biosynthesis of AMP from IMP. The protein is Adenylosuccinate synthetase (Adss) of Plasmodium falciparum.